The sequence spans 135 residues: CDGSH iron-sulfur domain-containing protein 2A (135 aa).

Residues 1–37 (MVLESIARVIKVQLPAYLKRLPIPDSIAGFIRLTVSE) are Lumenal-facing. A helical transmembrane segment spans residues 38 to 60 (WLRLLPFLGVLALLGYLAIRPFL). The Cytoplasmic segment spans residues 61-135 (LKKKQQKDSL…GPLILKKKEV (75 aa)). Residues cysteine 99, cysteine 101, cysteine 110, and histidine 114 each coordinate [2Fe-2S] cluster.

It belongs to the CISD protein family. CISD2 subfamily. As to quaternary structure, homodimer. The cofactor is [2Fe-2S] cluster.

The protein localises to the endoplasmic reticulum membrane. The protein resides in the mitochondrion outer membrane. Functionally, regulator of autophagy that contributes to antagonize becn1-mediated cellular autophagy at the endoplasmic reticulum. Participates in the interaction of bcl2 with becn1 and is required for bcl2-mediated depression of endoplasmic reticulum Ca(2+) stores during autophagy. This is CDGSH iron-sulfur domain-containing protein 2A (cisd2-a) from Xenopus laevis (African clawed frog).